A 278-amino-acid polypeptide reads, in one-letter code: Tryptophan 2,3-dioxygenase (278 aa).

Substrate contacts are provided by residues 47–51, Tyr109, and Arg113; that span reads FIVQH. His236 serves as a coordination point for heme. Position 250 (Thr250) interacts with substrate.

This sequence belongs to the tryptophan 2,3-dioxygenase family. In terms of assembly, homotetramer. Heme serves as cofactor.

The catalysed reaction is L-tryptophan + O2 = N-formyl-L-kynurenine. It participates in amino-acid degradation; L-tryptophan degradation via kynurenine pathway; L-kynurenine from L-tryptophan: step 1/2. In terms of biological role, heme-dependent dioxygenase that catalyzes the oxidative cleavage of the L-tryptophan (L-Trp) pyrrole ring and converts L-tryptophan to N-formyl-L-kynurenine. Catalyzes the oxidative cleavage of the indole moiety. This is Tryptophan 2,3-dioxygenase from Ralstonia pickettii (strain 12J).